We begin with the raw amino-acid sequence, 91 residues long: HssA/B-like protein 24 (91 aa).

Belongs to the hssA/B family.

The polypeptide is HssA/B-like protein 24 (hssl24) (Dictyostelium discoideum (Social amoeba)).